Reading from the N-terminus, the 33-residue chain is MNLEIVFQLTALLFVVAAGPLVIVLLASRGGNL.

A helical membrane pass occupies residues I5 to L25.

This sequence belongs to the Psb30/Ycf12 family. In terms of assembly, PSII is composed of 1 copy each of membrane proteins PsbA, PsbB, PsbC, PsbD, PsbE, PsbF, PsbH, PsbI, PsbJ, PsbK, PsbL, PsbM, PsbT, PsbX, PsbY, PsbZ, Psb30/Ycf12, peripheral proteins of the oxygen-evolving complex and a large number of cofactors. It forms dimeric complexes.

It localises to the plastid. It is found in the chloroplast thylakoid membrane. Its function is as follows. A core subunit of photosystem II (PSII), probably helps stabilize the reaction center. In Chlorella vulgaris (Green alga), this protein is Photosystem II reaction center protein Psb30.